The following is a 975-amino-acid chain: Translation initiation factor IF-2 (975 aa).

Residues 48–63 (DHLRKSHGATDGDKRK) show a composition bias toward basic and acidic residues. Disordered regions lie at residues 48–84 (DHLR…GKAR) and 98–388 (KRDD…QAPT). Low complexity predominate over residues 104-115 (ETGADQAQAQTD). A compositionally biased stretch (basic and acidic residues) spans 120–177 (AELKRREEEARREAELLEKQAQELRERQERLEREEAERRAREEAAEAERRRAEEEAAA). Residues 178-211 (KRAAAAQAEAAQQAAAAREQAQRAQSEPAEQSAQ) show a composition bias toward low complexity. The span at 212–263 (DEARAAAERAAQREAAKKAEDAAREAADKARAEQEEIRKRREAAEAEARAIR) shows a compositional bias: basic and acidic residues. Over residues 302 to 330 (KPAGEAAAARPAAKKPASGAPAPAAAPAG) the composition is skewed to low complexity. Gly residues predominate over residues 359–372 (SSGGVDRGWRGGPK). A tr-type G domain is found at 475–644 (PRPPVVTVMG…LLQAEVLELK (170 aa)). Positions 484-491 (GHVDHGKT) are G1. 484-491 (GHVDHGKT) contacts GTP. Positions 509 to 513 (GITQH) are G2. A G3 region spans residues 530–533 (DTPG). GTP contacts are provided by residues 530 to 534 (DTPGH) and 584 to 587 (NKID). Residues 584–587 (NKID) form a G4 region. The tract at residues 620–622 (SAK) is G5.

It belongs to the TRAFAC class translation factor GTPase superfamily. Classic translation factor GTPase family. IF-2 subfamily.

The protein localises to the cytoplasm. Functionally, one of the essential components for the initiation of protein synthesis. Protects formylmethionyl-tRNA from spontaneous hydrolysis and promotes its binding to the 30S ribosomal subunits. Also involved in the hydrolysis of GTP during the formation of the 70S ribosomal complex. The protein is Translation initiation factor IF-2 of Burkholderia mallei (strain NCTC 10247).